A 273-amino-acid chain; its full sequence is Translation initiation factor IF-3, mitochondrial (273 aa).

The transit peptide at 1–32 (MAALFLKKLTLQTVKTENYCIRRCLGKYILQG) directs the protein to the mitochondrion. A propeptide spans 33-92 (PAPTQQPPRPSCLIHAKAFSTEDTQDEMTKKKKNETAFSSVGRKINERIIHVLDEQGNDL) (removed in mature form). The interval 242-273 (EEAAWKAAPDTPRRDALNGGDGKDGASGVLPQ) is disordered. A compositionally biased stretch (basic and acidic residues) spans 252–265 (TPRRDALNGGDGKD).

The protein belongs to the IF-3 family.

The protein localises to the mitochondrion. Functionally, IF-3 binds to the 28S ribosomal subunit and shifts the equilibrium between 55S ribosomes and their 39S and 28S subunits in favor of the free subunits, thus enhancing the availability of 28S subunits on which protein synthesis initiation begins. In Bos taurus (Bovine), this protein is Translation initiation factor IF-3, mitochondrial (MTIF3).